The following is a 541-amino-acid chain: Arginine--tRNA ligase (541 aa).

The 'HIGH' region signature appears at 119–129 (ANPTGPLHIGH).

This sequence belongs to the class-I aminoacyl-tRNA synthetase family. In terms of assembly, monomer.

Its subcellular location is the cytoplasm. The enzyme catalyses tRNA(Arg) + L-arginine + ATP = L-arginyl-tRNA(Arg) + AMP + diphosphate. This Helicobacter pylori (strain ATCC 700392 / 26695) (Campylobacter pylori) protein is Arginine--tRNA ligase (argS).